The primary structure comprises 236 residues: Alpha-acetolactate decarboxylase (236 aa).

Belongs to the alpha-acetolactate decarboxylase family.

The enzyme catalyses (2S)-2-acetolactate + H(+) = (R)-acetoin + CO2. It participates in polyol metabolism; (R,R)-butane-2,3-diol biosynthesis; (R,R)-butane-2,3-diol from pyruvate: step 2/3. In terms of biological role, converts acetolactate into acetoin. This chain is Alpha-acetolactate decarboxylase (aldB), found in Lactococcus lactis subsp. lactis (strain IL1403) (Streptococcus lactis).